The sequence spans 266 residues: HLA class II histocompatibility antigen, DR beta 3 chain (266 aa).

An N-terminal signal peptide occupies residues methionine 1–alanine 29. The interval glycine 30–valine 124 is beta-1. Residues glycine 30–lysine 227 lie on the Extracellular side of the membrane. 2 cysteine pairs are disulfide-bonded: cysteine 44–cysteine 108 and cysteine 146–cysteine 202. Asparagine 48 carries N-linked (GlcNAc...) asparagine glycosylation. The segment at histidine 125–lysine 227 is beta-2. Residues proline 126 to threonine 214 form the Ig-like C1-type domain. A helical transmembrane segment spans residues methionine 228–isoleucine 248. At tyrosine 249–serine 266 the chain is on the cytoplasmic side.

This sequence belongs to the MHC class II family. As to quaternary structure, heterotrimer that consists of an alpha chain HLA-DRA, a beta chain HLA-DRB1 and a peptide (peptide-MHCII). Newly synthesized alpha and beta chains forms a heterodimer (MHCII) that associates with the CD74/invariant chain (Ii) in the endoplasmic reticulum (ER). Ii is a trimer composed of three subunits and each subunit interacts with one MHCII dimer, blocking the peptide-binding cleft. As a result, MHCII molecules cannot bind peptides present in the ER. The complex of MHCII and CD74/Ii is transported in vesicles from ER to Golgi to lysosomes, where it encounters antigenic peptides generated via proteolysis of endocytosed antigens. MHCII dimers are dissociated from CD74/Ii by the combined action of proteolysis and HLA-DM. Lysosomal enzymes such as cathepsin, degrade CD74/Ii leaving a 24 amino acid remnant called class II-associated Ii or CLIP. Interacts (via the peptide binding cleft) with CLIP; this interaction inhibits antigen peptide binding before entry in the endosomal compartment. The displacement of CLIP and replacement by a high affinity peptide in lysosomes is performed by HLA-DM heterodimer. HLA-DM catalyzes CLIP dissociation from MHCII, stabilizes empty MHCII and mediates the selection of high affinity peptides. Interacts with HLA-DM heterodimer; this interaction is direct. Interacts with TCR (via CDR3). Interacts (via beta-2 domain) with CD4 coreceptor (via Ig-like V-type domain); this interaction is of exceptionally low affinity yet necessary for optimal recognition of antigenic peptides. Post-translationally, ubiquitinated by MARCHF1 and MARCHF8 at Lys-254 leading to sorting into the endosome system and down-regulation of MHC class II. Expressed in professional APCs: monocyte/macrophages, dendritic cells and B cells (at protein level).

The protein resides in the cell membrane. It is found in the endoplasmic reticulum membrane. Its subcellular location is the lysosome membrane. It localises to the late endosome membrane. The protein localises to the autolysosome membrane. Its function is as follows. A beta chain of antigen-presenting major histocompatibility complex class II (MHCII) molecule. In complex with the alpha chain HLA-DRA, displays antigenic peptides on professional antigen presenting cells (APCs) for recognition by alpha-beta T cell receptor (TCR) on HLA-DRB3-restricted CD4-positive T cells. This guides antigen-specific T-helper effector functions, both antibody-mediated immune response and macrophage activation, to ultimately eliminate the infectious agents and transformed cells. Typically presents extracellular peptide antigens of 10 to 30 amino acids that arise from proteolysis of endocytosed antigens in lysosomes. In the tumor microenvironment, presents antigenic peptides that are primarily generated in tumor-resident APCs likely via phagocytosis of apoptotic tumor cells or macropinocytosis of secreted tumor proteins. Presents peptides derived from intracellular proteins that are trapped in autolysosomes after macroautophagy, a mechanism especially relevant for T cell selection in the thymus and central immune tolerance. The selection of the immunodominant epitopes follows two processing modes: 'bind first, cut/trim later' for pathogen-derived antigenic peptides and 'cut first, bind later' for autoantigens/self-peptides. The anchor residue at position 1 of the peptide N-terminus, usually a large hydrophobic residue, is essential for high affinity interaction with MHCII molecules. Functionally, ALLELE DRB3*01:01: Exclusively presents several immunogenic epitopes derived from C.tetani neurotoxin tetX, playing a significant role in immune recognition and long-term protection. Presents viral epitopes derived from HHV-6B U11, TRX2/U56 and U85 antigens to polyfunctional CD4-positive T cells with cytotoxic activity implicated in control of HHV-6B infection. In terms of biological role, ALLELE DRB3*02:02 Exclusively presents several immunogenic epitopes derived from C.tetani neurotoxin tetX, playing a significant role in immune recognition and long-term protection. Upon EBV infection, presents to CD4-positive T cells latent antigen EBNA2 (PRSPTVFYNIPPMPLPPSQL) and lytic antigen BZLF1 (LTAYHVSTAPTGSWF) peptides, driving oligoclonal expansion and selection of virus-specific memory T cell subsets with cytotoxic potential to directly eliminate virus-infected B cells. Presents viral epitopes derived from HHV-6B U11, gB/U39 and gH/U48 antigens to polyfunctional CD4-positive T cells with cytotoxic activity implicated in control of HHV-6B infection. Plays a minor role in CD4-positive T cell immune response against Dengue virus by presenting conserved peptides from capsid and non-structural NS3 proteins. Displays peptides derived from IAV matrix protein M, implying a role in protection against IAV infection. In the context of tumor immunesurveillance, may present to T-helper 1 cells an immunogenic epitope derived from tumor-associated antigen WT1 (KRYFKLSHLQMHSRKH), likely providing for effective antitumor immunity in a wide range of solid and hematological malignancies. Presents to Vbeta2-positive T-helper 1 cells specifically an immunodominant peptide derived from tumor antigen CTAG1A/NY-ESO-1(PGVLLKEFTVSGNILTIRLTAADHR) and confers protective memory response. In metastatic epithelial tumors, presents to intratumoral CD4-positive T cells a TP53 neoantigen (HYNYMCNSSCMGSMNRRPILTIITL) carrying G245S hotspot driver mutation and may mediate tumor regression. ALLELE DRB3*03:01: Presents a series of conserved peptides derived from the M.tuberculosis PPE family of proteins, in particular PPE29 and PPE33, known to be highly immunogenic. Presents immunogenic epitopes derived from C.tetani neurotoxin tetX, playing a role in immune recognition and long-term protection. Displays immunodominant viral peptides from HCV non-structural protein NS2, as part of a broad range T-helper response to resolve infection. The polypeptide is HLA class II histocompatibility antigen, DR beta 3 chain (HLA-DRB3) (Homo sapiens (Human)).